We begin with the raw amino-acid sequence, 30 residues long: Mycofactocin precursor peptide (30 aa).

Belongs to the mycofactocin precursor peptide family. As to quaternary structure, interacts with MftB. The post-translational modifications that lead to mycofactocin involve oxidative decarboxylation of the C-terminal tyrosine residue catalyzed by MftC, introduction of a tyramine-valine cross-link, removal of the modified C-terminal dipeptide by MftE. The released dipeptide then undergoes oxidative deamination by MftD, glycosylation by MftF and methylation by an unknown enzyme.

In terms of biological role, precursor peptide that leads to mycofactocin (MFT) after extensive post-translational modifications by enzymes encoded by adjacent genes. Mycofactocin acts as a redox cofactor of nicotinamide-dependent oxidoreductases encoded in the same locus. This Mycobacterium ulcerans (strain Agy99) protein is Mycofactocin precursor peptide.